A 242-amino-acid polypeptide reads, in one-letter code: N-alpha-acetyltransferase 60 (242 aa).

At 1 to 192 (MTEVVPSSAL…GGHPPWTILD (192 aa)) the chain is on the cytoplasmic side. One can recognise an N-acetyltransferase domain in the interval 13–182 (VSLRLLCHDD…DGFTYVLYIN (170 aa)). Y38 serves as a coordination point for substrate. At K79 the chain carries N6-acetyllysine; by autocatalysis. The active site involves Y97. L99 contributes to the substrate binding site. 101–103 (LGV) contacts acetyl-CoA. N6-acetyllysine; by autocatalysis is present on residues K105, K109, and K121. 109 to 114 (KHGIGS) is a binding site for acetyl-CoA. The active site involves H138. Residues N143 and 150–153 (YENR) contribute to the acetyl-CoA site. The interval 162–173 (PYYYSIRGVLKD) is required for homodimerization. Substrate is bound at residue Y165. Residues 193–236 (YIQHLGSALANLSPCSIPHRIYRQAHSLLCSFLPWSSISTKGGI) constitute an intramembrane region (helical). Residues 237 to 242 (EYSRTM) lie on the Cytoplasmic side of the membrane.

Belongs to the acetyltransferase family. NAA60 subfamily. Monomer and homodimer; monomer in presence of substrate and homodimer in its absence. Acetylated: autoacetylation is required for optimal acetyltransferase activity.

The protein localises to the golgi apparatus membrane. The catalysed reaction is N-terminal L-methionyl-[transmembrane protein] + acetyl-CoA = N-terminal N(alpha)-acetyl-L-methionyl-[transmembrane protein] + CoA + H(+). The enzyme catalyses L-lysyl-[protein] + acetyl-CoA = N(6)-acetyl-L-lysyl-[protein] + CoA + H(+). N-alpha-acetyltransferase that specifically mediates the acetylation of N-terminal residues of the transmembrane proteins, with a strong preference for N-termini facing the cytosol. Displays N-terminal acetyltransferase activity towards a range of N-terminal sequences including those starting with Met-Lys, Met-Val, Met-Ala and Met-Met. Required for normal chromosomal segregation during anaphase. May also show histone acetyltransferase activity; such results are however unclear in vivo and would require additional experimental evidences. The chain is N-alpha-acetyltransferase 60 (Naa60) from Mus musculus (Mouse).